The sequence spans 312 residues: Tyrosine recombinase XerC (312 aa).

The region spanning 1–103 (MIASIYSFLD…SIKSFAHYCV (103 aa)) is the Core-binding (CB) domain. The 183-residue stretch at 124-306 (ELPSPMTYAQ…SVKLKKQTHQ (183 aa)) folds into the Tyr recombinase domain. Residues R164, K188, H258, R261, and H284 contribute to the active site. Y293 (O-(3'-phospho-DNA)-tyrosine intermediate) is an active-site residue.

It belongs to the 'phage' integrase family. XerC subfamily. Forms a cyclic heterotetrameric complex composed of two molecules of XerC and two molecules of XerD.

Its subcellular location is the cytoplasm. In terms of biological role, site-specific tyrosine recombinase, which acts by catalyzing the cutting and rejoining of the recombining DNA molecules. The XerC-XerD complex is essential to convert dimers of the bacterial chromosome into monomers to permit their segregation at cell division. It also contributes to the segregational stability of plasmids. This chain is Tyrosine recombinase XerC, found in Chlamydia pneumoniae (Chlamydophila pneumoniae).